A 107-amino-acid chain; its full sequence is Prepilin peptidase-dependent protein C (107 aa).

Residues 1 to 10 constitute a propeptide that is removed on maturation; sequence MSASLKNQQG. Phenylalanine 11 is subject to N-methylphenylalanine. The helical transmembrane segment at 11–30 threads the bilayer; the sequence is FSLPEVMLAMVLMVMIVTAL.

It localises to the membrane. In terms of biological role, not yet known. This Escherichia coli (strain K12) protein is Prepilin peptidase-dependent protein C (ppdC).